The primary structure comprises 521 residues: Apolipoprotein N-acyltransferase (521 aa).

A run of 6 helical transmembrane segments spans residues 27-47, 64-84, 93-113, 125-145, 167-187, and 202-222; these read VLLALSFPSPGISPLAWIAFA, LGFVTGLAAYAGILYWITIVV, IVSVGVLSMLVSYLALYPAVV, ISLLISFPLLWVGLEYGRAFL, IADITGVYGLSFLIALANVVL, and YPVKSVVLLLVLLLVTIAYGF. Residues 239 to 483 enclose the CN hydrolase domain; the sequence is IQGNIDQNIK…EAVLNGEVRL (245 aa). Residue glutamate 281 is the Proton acceptor of the active site. Lysine 344 is an active-site residue. Cysteine 394 functions as the Nucleophile in the catalytic mechanism. The helical transmembrane segment at 493 to 513 threads the bilayer; it reads YGDVFAWACVAGAAVVAALAF.

Belongs to the CN hydrolase family. Apolipoprotein N-acyltransferase subfamily.

Its subcellular location is the cell inner membrane. It carries out the reaction N-terminal S-1,2-diacyl-sn-glyceryl-L-cysteinyl-[lipoprotein] + a glycerophospholipid = N-acyl-S-1,2-diacyl-sn-glyceryl-L-cysteinyl-[lipoprotein] + a 2-acyl-sn-glycero-3-phospholipid + H(+). It functions in the pathway protein modification; lipoprotein biosynthesis (N-acyl transfer). Its function is as follows. Catalyzes the phospholipid dependent N-acylation of the N-terminal cysteine of apolipoprotein, the last step in lipoprotein maturation. The chain is Apolipoprotein N-acyltransferase from Geobacter metallireducens (strain ATCC 53774 / DSM 7210 / GS-15).